Consider the following 137-residue polypeptide: 5-hydroxyisourate hydrolase (137 aa).

Residues methionine 1–alanine 23 form the signal peptide. Positions 32, 70, and 134 each coordinate substrate.

Belongs to the transthyretin family. 5-hydroxyisourate hydrolase subfamily. As to quaternary structure, homotetramer.

It is found in the periplasm. The enzyme catalyses 5-hydroxyisourate + H2O = 5-hydroxy-2-oxo-4-ureido-2,5-dihydro-1H-imidazole-5-carboxylate + H(+). Its function is as follows. Catalyzes the hydrolysis of 5-hydroxyisourate (HIU) to 2-oxo-4-hydroxy-4-carboxy-5-ureidoimidazoline (OHCU). The polypeptide is 5-hydroxyisourate hydrolase (hiuH) (Escherichia coli O157:H7).